Here is a 247-residue protein sequence, read N- to C-terminus: Oocyte zinc finger protein XlCOF20 (247 aa).

8 consecutive C2H2-type zinc fingers follow at residues 6–28 (YDCR…QRVH), 34–56 (FPCT…QRVH), 62–84 (FICS…LRVH), 90–112 (FVCT…QRVH), 118–140 (FTCT…LRVH), 146–168 (FVCT…LRVH), 174–196 (FMCA…QRIC), and 225–247 (QSCA…MRVH).

This sequence belongs to the krueppel C2H2-type zinc-finger protein family.

It localises to the nucleus. In terms of biological role, may be involved in transcriptional regulation. The sequence is that of Oocyte zinc finger protein XlCOF20 from Xenopus laevis (African clawed frog).